The primary structure comprises 215 residues: MKILVTGFDPFGGEAINPALEAIKKLPATIHGAEIKYIEVPTVFQKSADVLQQHIESFQPDAVLCIGQAGGRTGLTPERVAINQDDARIPDNEGNQPIDTPIRADGKAAYFSTLPIKAMVAAIHQAGLPASVSNTAGTFVCNHLMYQALYLVDKYCPNAKAGFMHIPFMMEQVVDKPNTAAMNLDDITRGIEAAIFAIVDFKDRSDLKRVGGATH.

Residues glutamate 78, cysteine 141, and histidine 165 contribute to the active site.

Belongs to the peptidase C15 family. Homotetramer.

The protein resides in the cytoplasm. The catalysed reaction is Release of an N-terminal pyroglutamyl group from a polypeptide, the second amino acid generally not being Pro.. Functionally, removes 5-oxoproline from various penultimate amino acid residues except L-proline. This Streptococcus pyogenes serotype M12 (strain MGAS2096) protein is Pyrrolidone-carboxylate peptidase.